The primary structure comprises 1214 residues: NKGKTFTSKYVIMTSNTETPVKPTSRRAGAFYRRVMIVDVTNNAVEKWKSDNPGKAVPKWCFNKDFSHLSLSLRGTEAYCKEYVLDPTGRNHQSRRAPPPQQVTLEQLAQKMVVQHTTNTSEFVTQAGDVPVFGFVCQNNEIDTVYNLLAAVKARYGANFNLYKGMVRTAHENSGCGAHVHVISREDNFRGKVFTVSRSRLESVPHLEGDSFRRSLGVVMSDKDVTTMFYYIKGKVINDQVNLTELPANQHVVTVHTVYDMAWALRRHLKWSGQWQLIKAAFEIMCYPDAAACALRNWMDSTDFSEEHVVTQFIAPGGTIILESCHGARMWATGKRLIRAGGITEAGGPQGGVRFAGLGARNVPWSEILREFMTLISHIWSQIKGATVVLTALTFYLKRFRPRIEAKGKNKNKGARKNTGVALTDDEYDEWRQYRTEKNLDLTVEDFLQLRHRAAMGADDSDAVKFRCWYSERQRNYHDLEDVTIIGRGGVKRELIRKGPLRPRGNDYYDEPDDWYSEGVIDGVAHKNAIVSVDDVDGMHKGYAIHIGHGVYISLKHVVSGNARILSEEPKNLTFTGELATFRLNNILPTAVPVGTSKPIKDPWGNPVSTDWQFKNYNTTSGNIYGACGSSCSLTRQGDCGLPYVDDHGVVVGLHAGSGGDKCPSRKLIVPYAKVDMRVRDTCTKQCYKDNSPTISYKGLLVKETGEPRTIMKGTRLHVSPAHTDDYEECTHQPASLGAGDPRCPISLTGIMVNNLQPYTEASPGPDTATLNRVSKMLTSHMEGYVQKSQTEEGYGSAFYMLNHDTSCGPYIGGRKKDHVKDGVLDKNLLDLLSSKWNRAKLGLALPHEYALGLKDELRPKDKVAVGKRRLIWGCDVGVSTVCRAAFKRVSESIMANHALGFIQVGINMDGPAVEDLFKRLERPKHDRYCVDYSKWDSTQPPKVTSQSIDILRHFTDKSPIVDSACATLKSNPIGIFNGVAFKVAGGLPSGMPLTSIINSLNHCLMVGSAVVKALEDSGVQVSWNIFDSMDLFTYGDDGVYIVPPLISSVMPNVFANLKQFGLKPTRTDKSDAEITPIPADEPVEFLKRTIVRTENGIRALLDRSSIIRQFYYIKAENTENWTIPPKKIDTPSRGQQLYNACLYASQHGEEFYTNKIIPLVQRAIEFEGLHIEVPEFHHAVAAYNGYFNGTEGQPNQIAFASGGLGLSSEVFEN.

In terms of domain architecture, SF3 helicase spans 1-55 (NKGKTFTSKYVIMTSNTETPVKPTSRRAGAFYRRVMIVDVTNNAVEKWKSDNPGK). Residue tyrosine 428 is modified to O-(5'-phospho-RNA)-tyrosine. The region spanning 523 to 676 (GVAHKNAIVS…KLIVPYAKVD (154 aa)) is the Peptidase C24 domain. Catalysis depends on for 3CLpro activity residues histidine 557, glutamate 578, and cysteine 640. In terms of domain architecture, RdRp catalytic spans 926–1051 (HDRYCVDYSK…IVPPLISSVM (126 aa)).

Post-translationally, specific enzymatic cleavages in vivo yield mature proteins. Pro-Pol is first autocatalytically cleaved, then processes the whole polyprotein. In terms of processing, VPg is uridylylated by the polymerase and is covalently attached to the 5'-end of the polyadenylated genomic and subgenomic RNAs. This uridylylated form acts as a nucleotide-peptide primer for the polymerase.

It catalyses the reaction a ribonucleoside 5'-triphosphate + H2O = a ribonucleoside 5'-diphosphate + phosphate + H(+). The enzyme catalyses RNA(n) + a ribonucleoside 5'-triphosphate = RNA(n+1) + diphosphate. It carries out the reaction Endopeptidase with a preference for cleavage when the P1 position is occupied by Glu-|-Xaa and the P1' position is occupied by Gly-|-Yaa.. NTPase presumably plays a role in replication. Despite having similarities with helicases, does not seem to display any helicase activity. In terms of biological role, viral genome-linked protein is covalently linked to the 5'-end of the positive-strand, negative-strand genomic RNAs and subgenomic RNA. Acts as a genome-linked replication primer. May recruit ribosome to viral RNA thereby promoting viral proteins translation. Functionally, protease-polymerase p76 processes the polyprotein: Pro-Pol is first released by autocleavage, then all other proteins are cleaved. Cleaves host translation initiation factor eIF4G1 and eIF4G2 thereby inducing a shutdown of host protein synthesis. This shutdown may not prevent viral mRNA from being translated since viral Vpg replaces the cap. May cleave host polyadenylate-binding protein thereby inhibiting cellular translation. It is also an RNA-directed RNA polymerase which replicates genomic and antigenomic viral RNA by recognizing specific signals. Also transcribes a subgenomic mRNA by initiating RNA synthesis internally on antigenomic RNA. This sgRNA codes for structural proteins. Catalyzes the covalent attachment VPg with viral RNAs. The sequence is that of Genome polyprotein from San Miguel sea lion virus serotype 4 (SMSV-4).